The chain runs to 172 residues: Ribosome maturation factor RimM (172 aa).

The PRC barrel domain occupies 96-168; that stretch reads DGEFYYHEII…RVDVEIPEGL (73 aa).

The protein belongs to the RimM family. Binds ribosomal protein uS19.

Its subcellular location is the cytoplasm. An accessory protein needed during the final step in the assembly of 30S ribosomal subunit, possibly for assembly of the head region. Essential for efficient processing of 16S rRNA. May be needed both before and after RbfA during the maturation of 16S rRNA. It has affinity for free ribosomal 30S subunits but not for 70S ribosomes. In Streptococcus sanguinis (strain SK36), this protein is Ribosome maturation factor RimM.